Here is a 150-residue protein sequence, read N- to C-terminus: Monothiol glutaredoxin-5, mitochondrial (150 aa).

Residues 1 to 29 constitute a mitochondrion transit peptide; the sequence is MFLPKFNPIRSFSPILRAKTLLRYQNRMY. The Glutaredoxin domain occupies 35 to 140; sequence RKAIEDAIES…DLLEEAQALV (106 aa). Glutathione is bound at residue Lys-52. Cys-60 is a binding site for [2Fe-2S] cluster. Residues 92–96, Ile-104, and 117–118 each bind glutathione; these read REGIK and CD.

Belongs to the glutaredoxin family. Monothiol subfamily. Homodimer. Interacts with SSQ1. Interacts with BOL1.

The protein localises to the mitochondrion matrix. Functionally, monothiol glutaredoxin involved in mitochondrial iron-sulfur (Fe/S) cluster transfer. Receives 2Fe/2S clusters from scaffold protein ISU1 and mediates their transfer to apoproteins, to the 4Fe/FS cluster biosynthesis machinery, or export from mitochondrion. The protein is Monothiol glutaredoxin-5, mitochondrial of Saccharomyces cerevisiae (strain ATCC 204508 / S288c) (Baker's yeast).